The following is a 236-amino-acid chain: UPF0257 lipoprotein YnfC (236 aa).

Residues 1–16 (MKKPLLLTLLCMILAG) form the signal peptide. Cys17 carries the N-palmitoyl cysteine lipid modification. Cys17 carries the S-diacylglycerol cysteine lipid modification.

This sequence belongs to the UPF0257 family.

It is found in the cell membrane. This Salmonella typhi protein is UPF0257 lipoprotein YnfC.